The primary structure comprises 246 residues: Ubiquitin-conjugating enzyme E2 6 (246 aa).

The Cytoplasmic portion of the chain corresponds to 1-224; the sequence is MATKQAQKRL…LEKQHNDKPN (224 aa). The 150-residue stretch at 5 to 154 folds into the UBC core domain; that stretch reads QAQKRLTKEY…FNSTRFKLVF (150 aa). Cys87 acts as the Glycyl thioester intermediate in catalysis. Residues 225–245 traverse the membrane as a helical segment; the sequence is GSSSMFYIGVALFLFLVGLFM.

It belongs to the ubiquitin-conjugating enzyme family.

The protein resides in the endoplasmic reticulum membrane. The enzyme catalyses S-ubiquitinyl-[E1 ubiquitin-activating enzyme]-L-cysteine + [E2 ubiquitin-conjugating enzyme]-L-cysteine = [E1 ubiquitin-activating enzyme]-L-cysteine + S-ubiquitinyl-[E2 ubiquitin-conjugating enzyme]-L-cysteine.. It participates in protein modification; protein ubiquitination. Functionally, catalyzes the covalent attachment of ubiquitin to other proteins. Functions in degradation of misfolded or regulated proteins localized in the endoplasmic reticulum (ER) lumen or membrane via the ubiquitin-proteasome system. Cognate E2 conjugating enzyme for the DOA10 ubiquitin ligase complex, which is part of the ERAD-C pathway responsible for the rapid degradation of membrane proteins with misfolded cytoplasmic domains. The chain is Ubiquitin-conjugating enzyme E2 6 (UBC6) from Candida glabrata (strain ATCC 2001 / BCRC 20586 / JCM 3761 / NBRC 0622 / NRRL Y-65 / CBS 138) (Yeast).